Consider the following 277-residue polypeptide: Phosphatidylglycerol--prolipoprotein diacylglyceryl transferase (277 aa).

The next 4 helical transmembrane spans lie at 18 to 38 (ISVKWYGVIIASAVVIALLLA), 51 to 71 (IIVDLLIWAIPISIISARIYY), 89 to 109 (IWHGGIAIYGALIGAVLTAVI), and 116 to 136 (ISFWKLADVVAPSLIIAQAIG). R137 lines the a 1,2-diacyl-sn-glycero-3-phospho-(1'-sn-glycerol) pocket. Helical transmembrane passes span 177 to 197 (QPTFLYESLWNVLGFIVLLII), 205 to 225 (GELFLSYVIWYSFGRFFIEGM), and 235 to 255 (FRVSQVLSLLLIVLSIGLIIY).

Belongs to the Lgt family.

Its subcellular location is the cell membrane. It catalyses the reaction L-cysteinyl-[prolipoprotein] + a 1,2-diacyl-sn-glycero-3-phospho-(1'-sn-glycerol) = an S-1,2-diacyl-sn-glyceryl-L-cysteinyl-[prolipoprotein] + sn-glycerol 1-phosphate + H(+). It participates in protein modification; lipoprotein biosynthesis (diacylglyceryl transfer). Catalyzes the transfer of the diacylglyceryl group from phosphatidylglycerol to the sulfhydryl group of the N-terminal cysteine of a prolipoprotein, the first step in the formation of mature lipoproteins. The protein is Phosphatidylglycerol--prolipoprotein diacylglyceryl transferase of Listeria innocua serovar 6a (strain ATCC BAA-680 / CLIP 11262).